We begin with the raw amino-acid sequence, 733 residues long: Leucine-rich repeat neuronal protein 4 (733 aa).

The first 19 residues, 1–19, serve as a signal peptide directing secretion; sequence MRWTLMLQLLQLLLQLLMA. At 20–676 the chain is on the extracellular side; it reads QSQSLERISQ…CATFTTKPSS (657 aa). 10 LRR repeats span residues 62 to 82, 83 to 106, 107 to 128, 130 to 151, 154 to 175, 178 to 199, 207 to 230, 231 to 253, 256 to 278, and 281 to 302; these read GVTT…CLPR, TLRS…GRLP, ELRV…RDTL, ELRE…AGPS, SLRS…TFAC, ALRL…AFAG, ALEL…RNLP, KLKS…IFKM, NLRQ…IFQD, and NLQV…NSSQ. An N-linked (GlcNAc...) asparagine glycan is attached at N70. N-linked (GlcNAc...) asparagine glycosylation is present at N183. N291, N299, N327, N408, and N469 each carry an N-linked (GlcNAc...) asparagine glycan. The LRRCT domain occupies 311 to 364; it reads NPLICSCELAWLLVDVNKTVLHRAADTMCEPALGSTGPFSGPLSLSHLSNVCRS. A disordered region spans residues 395-423; the sequence is STALSAQPGGSQQNITKVPSLTMTSPTQG. Residues 480 to 518 form a disordered region; it reads KYLEPLPTSPNPRSLPQTKQRTQATPRALHTDPPQDEIP. Residues 490–504 are compositionally biased toward polar residues; sequence NPRSLPQTKQRTQAT. A Fibronectin type-III domain is found at 576 to 675; that stretch reads TPDPPTLQGV…SCATFTTKPS (100 aa). N619 carries an N-linked (GlcNAc...) asparagine glycan. A helical membrane pass occupies residues 677–697; it reads VVIFWGLCTASGLLLVSTLVL. At 698–733 the chain is on the cytoplasmic side; sequence SVCLWRQRWKPHRQFYDTHLVAFKNPARAEEVTQWE.

The protein localises to the membrane. Its function is as follows. May play an important role in hippocampus-dependent long-lasting memory. The polypeptide is Leucine-rich repeat neuronal protein 4 (Lrrn4) (Mus musculus (Mouse)).